A 348-amino-acid polypeptide reads, in one-letter code: Dihydroorotase (348 aa).

Positions 17 and 19 each coordinate Zn(2+). Substrate-binding positions include 19-21 (HLR) and Asn45. Zn(2+) is bound by residues Lys103, His140, and His178. At Lys103 the chain carries N6-carboxylysine. Substrate is bound at residue His140. Leu223 is a substrate binding site. Asp251 provides a ligand contact to Zn(2+). Residue Asp251 is part of the active site. Residues His255 and Ala267 each coordinate substrate.

The protein belongs to the metallo-dependent hydrolases superfamily. DHOase family. Class II DHOase subfamily. In terms of assembly, homodimer. Zn(2+) is required as a cofactor.

It carries out the reaction (S)-dihydroorotate + H2O = N-carbamoyl-L-aspartate + H(+). It functions in the pathway pyrimidine metabolism; UMP biosynthesis via de novo pathway; (S)-dihydroorotate from bicarbonate: step 3/3. Its function is as follows. Catalyzes the reversible cyclization of carbamoyl aspartate to dihydroorotate. The polypeptide is Dihydroorotase (Escherichia coli (strain UTI89 / UPEC)).